The sequence spans 583 residues: Aspartate--tRNA ligase (583 aa).

Glutamate 174 lines the L-aspartate pocket. Residues glutamine 198–lysine 201 form an aspartate region. Arginine 220 is an L-aspartate binding site. ATP is bound by residues arginine 220–glutamate 222 and glutamine 229. Residue histidine 443 participates in L-aspartate binding. Glutamate 477 contacts ATP. Arginine 484 contributes to the L-aspartate binding site. Glycine 529–arginine 532 contributes to the ATP binding site.

The protein belongs to the class-II aminoacyl-tRNA synthetase family. Type 1 subfamily. As to quaternary structure, homodimer.

The protein resides in the cytoplasm. It carries out the reaction tRNA(Asp) + L-aspartate + ATP = L-aspartyl-tRNA(Asp) + AMP + diphosphate. Functionally, catalyzes the attachment of L-aspartate to tRNA(Asp) in a two-step reaction: L-aspartate is first activated by ATP to form Asp-AMP and then transferred to the acceptor end of tRNA(Asp). The polypeptide is Aspartate--tRNA ligase (Streptococcus agalactiae serotype III (strain NEM316)).